We begin with the raw amino-acid sequence, 376 residues long: DNA replication and repair protein RecF (376 aa).

30–37 (GNNAQGKS) is an ATP binding site.

Belongs to the RecF family.

The protein resides in the cytoplasm. Functionally, the RecF protein is involved in DNA metabolism; it is required for DNA replication and normal SOS inducibility. RecF binds preferentially to single-stranded, linear DNA. It also seems to bind ATP. This Nostoc sp. (strain PCC 7120 / SAG 25.82 / UTEX 2576) protein is DNA replication and repair protein RecF.